Consider the following 477-residue polypeptide: Octopamine receptor (477 aa).

At 1–55 (MGQAATHVDANYTLINYTEEVIEDDRDACAVADDPKYPSSFGITLAVPEWEAICT) the chain is on the extracellular side. N-linked (GlcNAc...) asparagine glycosylation is found at Asn-11 and Asn-16. A helical membrane pass occupies residues 56-78 (AIVLTLIIISTIVGNILVILSVF). Residues 79–88 (TYKPLRIVQN) are Cytoplasmic-facing. Residues 89 to 110 (FFIVSLAVADLTVAILVLPLNV) traverse the membrane as a helical segment. At 111–127 (AYSILGQWVFGIYVCKM) the chain is on the extracellular side. Residues 128 to 148 (WLTCDIMCCTSSILNLCAIAL) traverse the membrane as a helical segment. At 149 to 168 (DRYWAITDPINYAQKRTLER) the chain is on the cytoplasmic side. The helical transmembrane segment at 169-191 (VLLMIGVVWVLSLIISSPPLLGW) threads the bilayer. At 192-216 (NDWPDVFEPDTPCRLTSQPGFVIFS) the chain is on the extracellular side. Residues 217-238 (SSGSFYIPLVIMTVVYFEIYLA) traverse the membrane as a helical segment. The Cytoplasmic portion of the chain corresponds to 239-405 (TKKRLRDRAK…LTRERRAART (167 aa)). Disordered regions lie at residues 256 to 317 (SSGQ…SKDD) and 334 to 358 (VTDMGENLENRNTSSESNSKETHED). Composition is skewed to basic and acidic residues over residues 263 to 272 (NNKDDHHDQD) and 279 to 295 (NHNEHQGVTRLVSDNEK). Residues 296 to 312 (KKRTRKLTPKKKPKRKY) are compositionally biased toward basic residues. Residues 406-427 (LGIIMGVFVVCWLPFFVIYLVI) form a helical membrane-spanning segment. Over 428–439 (PFCASCCLSNKF) the chain is Extracellular. A helical membrane pass occupies residues 440 to 460 (INFITWLGYCNSALNPLIYTI). Topologically, residues 461 to 477 (FNMDFRRAFKKLLCMKP) are cytoplasmic.

The protein belongs to the G-protein coupled receptor 1 family.

It is found in the cell membrane. In terms of biological role, receptor for octopamine. Octopamine (OA) is a neurotransmitter, neurohormone, and neuromodulator in invertebrates. The activity of this receptor is mediated by G proteins which activate adenylyl cyclase. This Heliothis virescens (Tobacco budworm moth) protein is Octopamine receptor.